Here is a 152-residue protein sequence, read N- to C-terminus: Cell division protein SepF (152 aa).

Belongs to the SepF family. In terms of assembly, homodimer. Interacts with FtsZ.

It localises to the cytoplasm. Functionally, cell division protein that is part of the divisome complex and is recruited early to the Z-ring. Probably stimulates Z-ring formation, perhaps through the cross-linking of FtsZ protofilaments. Its function overlaps with FtsA. The protein is Cell division protein SepF of Clostridioides difficile (strain 630) (Peptoclostridium difficile).